A 255-amino-acid polypeptide reads, in one-letter code: Protein patched homolog 2 (255 aa).

The Extracellular segment spans residues 1 to 197 (SLLQGGSAYL…LNDIMKSFSD (197 aa)). Asparagine 147 and asparagine 175 each carry an N-linked (GlcNAc...) asparagine glycan. The chain crosses the membrane as a helical span at residues 198–218 (VSVIRVAGGYLLMLAYACVTM). One can recognise an SSD domain in the interval 199–255 (SVIRVAGGYLLMLAYACVTMLRWDCTKSQGAVGLAGVLLVALSVASGLGLCSLLGIS). The Cytoplasmic portion of the chain corresponds to 219–227 (LRWDCTKSQ). Residues 228 to 248 (GAVGLAGVLLVALSVASGLGL) traverse the membrane as a helical segment. Residues 249 to 255 (CSLLGIS) are Extracellular-facing.

The protein belongs to the patched family. In the eye, detected in neural retina, iris, retinal pigment epithelium, but not in lens.

The protein localises to the membrane. Its function is as follows. May act as a receptor for sonic hedgehog (SHH). This Cynops pyrrhogaster (Japanese fire-bellied newt) protein is Protein patched homolog 2 (PTC2).